The primary structure comprises 61 residues: ATP synthase subunit J, mitochondrial (61 aa).

A helical membrane pass occupies residues 13 to 32 (LVKYYWPFFVGFGLTFYGVA).

In terms of assembly, F-type ATP synthases have 2 components, the catalytic core F(1) and the membrane-embedded component F(0), linked together by a central stalk and a peripheral stalk. The central stalk, also called rotor shaft, is often seen as part of F(1). The peripheral stalk is seen as part of F(0). F(0) contains the membrane channel next to the rotor. F-type ATP synthases form dimers but each monomer functions independently in ATP generation. The dimer consists of 18 different polypeptides: ATP1 (subunit alpha, part of F(1), 3 molecules per monomer), ATP2 (subunit beta, part of F(1), 3 molecules per monomer), ATP3 (subunit gamma, part of the central stalk), ATP4 (subunit b, part of the peripheral stalk), ATP5/OSCP (subunit 5/OSCP, part of the peripheral stalk), ATP6 (subunit a, part of the peripheral stalk), ATP7 (subunit d, part of the peripheral stalk), ATP8 (subunit 8, part of the peripheral stalk), OLI1 (subunit c, part of the rotor, 10 molecules per monomer), ATP14 (subunit h, part of the peripheral stalk), ATP15 (subunit epsilon, part of the central stalk), ATP16 (subunit delta, part of the central stalk), ATP17 (subunit f, part of the peripheral stalk), ATP18 (subunit i/j, part of the peripheral stalk). Dimer-specific subunits are ATP19 (subunit k, at interface between monomers), ATP20 (subunit g, at interface between monomers), TIM11 (subunit e, at interface between monomers). Also contains subunit L.

The protein resides in the mitochondrion inner membrane. Its function is as follows. Mitochondrial membrane ATP synthase (F(1)F(0) ATP synthase or Complex V) produces ATP from ADP in the presence of a proton gradient across the membrane which is generated by electron transport complexes of the respiratory chain. F-type ATP synthases consist of two structural domains, F(1) - containing the extramembraneous catalytic core, and F(0) - containing the membrane proton channel, linked together by a central stalk and a peripheral stalk. During catalysis, ATP synthesis in the catalytic domain of F(1) is coupled via a rotary mechanism of the central stalk subunits to proton translocation. Part of the complex F(0) domain. Minor subunit located with subunit a/ATP6 in the membrane. This is ATP synthase subunit J, mitochondrial from Pichia angusta (Yeast).